The primary structure comprises 433 residues: Histone deacetylase RPD3 (433 aa).

The histone deacetylase stretch occupies residues 19–331 (RRVAYFYDAD…WCFETGLLNN (313 aa)). Residue H151 is part of the active site. The short motif at 320–340 (RTWCFETGLLNNVVLDKDLPY) is the ESA1-RPD3 motif element. The disordered stretch occupies residues 388 to 433 (SVQLNHTPRDAEDLGDVEEDSAEAKDTKGGSQYARDLHVEHDNEFY). At T394 the chain carries Phosphothreonine. S408 is modified (phosphoserine). Positions 422–433 (RDLHVEHDNEFY) are enriched in basic and acidic residues.

Belongs to the histone deacetylase family. HD type 1 subfamily. In terms of assembly, component of the RPD3C(L) complex composed of at least ASH1, CTI6, DEP1, PHO23, RPD3, RXT2, RXT3, SAP30, SDS3, SIN3, UME1 and UME6. Component of the RPD3C(S) complex composed of at least EAF3, RCO1, RPD3, SIN3, and UME1. Interacts with cyclophilins CPR1, CPR6 and CPR7, with the kinase HOG1, and with ESS1, CYC8 and HAC1.

It is found in the cytoplasm. It localises to the nucleus. The catalysed reaction is N(6)-acetyl-L-lysyl-[histone] + H2O = L-lysyl-[histone] + acetate. Functionally, catalytic component of the RPD3 histone deacetylase (HDAC) complexes RPD3C(L) and RPD3C(S) responsible for the deacetylation of lysine residues on the N-terminal part of the core histones (H2A, H2B, H3 and H4). Histone deacetylation plays an important role in transcriptional regulation, cell cycle progression, DNA damage response, osmotic stress response and developmental events. Is involved in rDNA and telomere silencing and in double strand breaks repair. Required for both full transcription repression and activation of many genes including cell type-specific genes (STE6, TY2 and HO), cell differentiation-specific genes (SPO13), genes that respond to external signals (PHO5) and TRK2. The RPD3 complexes regulate also chromosomal replication timing. This Saccharomyces cerevisiae (strain ATCC 204508 / S288c) (Baker's yeast) protein is Histone deacetylase RPD3 (RPD3).